We begin with the raw amino-acid sequence, 240 residues long: Large ribosomal subunit protein uL2 (240 aa).

Positions 1 to 12 (MGRRIQGQRRGR) are enriched in basic residues. 2 disordered regions span residues 1-21 (MGRR…RAPS) and 198-240 (VDHP…GSNK). Residues 221 to 231 (PPGRKVGDIAS) show a composition bias toward basic and acidic residues.

Belongs to the universal ribosomal protein uL2 family. Part of the 50S ribosomal subunit. Forms a bridge to the 30S subunit in the 70S ribosome.

In terms of biological role, one of the primary rRNA binding proteins. Required for association of the 30S and 50S subunits to form the 70S ribosome, for tRNA binding and peptide bond formation. It has been suggested to have peptidyltransferase activity; this is somewhat controversial. Makes several contacts with the 16S rRNA in the 70S ribosome. The protein is Large ribosomal subunit protein uL2 of Halorubrum lacusprofundi (strain ATCC 49239 / DSM 5036 / JCM 8891 / ACAM 34).